The primary structure comprises 270 residues: L-fucose dehydrogenase (270 aa).

Residues Arg-19, Ile-21, Asp-40, Lys-41, Asp-62, Val-63, Asn-89, Tyr-154, Lys-158, Ile-187, Thr-189, and Leu-191 each contribute to the NAD(+) site. The Proton acceptor role is filled by Tyr-154.

It belongs to the short-chain dehydrogenases/reductases (SDR) family. As to quaternary structure, homotetramer. Detected in retina.

It is found in the cytoplasm. The enzyme catalyses L-fucose + NAD(+) = L-fucono-1,5-lactone + NADH + H(+). The catalysed reaction is D-arabinose + NAD(+) = D-arabinono-1,5-lactone + NADH + H(+). It carries out the reaction L-galactose + NAD(+) = L-galactono-1,5-lactone + NADH + H(+). It functions in the pathway carbohydrate degradation; L-fucose degradation. Catalyzes the NAD(+)-dependent oxidation of L-fucose, yielding L-fucono-1,5-lactone, which rapidly converts spontaneously to L-fucone-1,4-lactone. Can also act on D-arabinose and L-galactose, with lower catalytic efficiency. Does not use NADPH. May be the initial enzyme of the putative L-fucose degradation pathway in mammals. This is L-fucose dehydrogenase (HSD17B14) from Bos taurus (Bovine).